Here is a 216-residue protein sequence, read N- to C-terminus: Maintenance of carboxysome distribution protein A (216 aa).

ATP contacts are provided by Gly-16, Gly-17, Gly-19, Lys-20, Thr-21, Thr-22, and Gln-45. Thr-21 contributes to the Mg(2+) binding site.

The protein belongs to the ParA family. McdA subfamily. As to quaternary structure, self-associates, associates with McdB.

It localises to the cytoplasm. The protein localises to the nucleoid. The catalysed reaction is ATP + H2O = ADP + phosphate + H(+). In terms of biological role, mcdA and McdB together mediate carboxysome positioning on the nucleoid and prevent their aggregation in the cell. McdA is an ATPase that forms dynamic gradients on the nucleoid in response to adapter protein McdB, which associates with carboxysomes. The interplay between McdA gradients on the nucleoid and McdB-bound carboxysomes result in the equal spacing of Cbs along the cell length. Functionally, incorrect positioning (aggregation) of carboxysomes results in reduced CO(2) fixation by encapsulated form 1 ribulose-1,5-bisphosphate carboxylase (RuBisCO, cbbL/cbbS), which leads to slower growth. In Halothiobacillus neapolitanus (strain ATCC 23641 / c2) (Thiobacillus neapolitanus), this protein is Maintenance of carboxysome distribution protein A.